A 310-amino-acid chain; its full sequence is Porphobilinogen deaminase (310 aa).

S-(dipyrrolylmethanemethyl)cysteine is present on C241.

This sequence belongs to the HMBS family. In terms of assembly, monomer. Dipyrromethane serves as cofactor.

It catalyses the reaction 4 porphobilinogen + H2O = hydroxymethylbilane + 4 NH4(+). Its pathway is porphyrin-containing compound metabolism; protoporphyrin-IX biosynthesis; coproporphyrinogen-III from 5-aminolevulinate: step 2/4. Its function is as follows. Tetrapolymerization of the monopyrrole PBG into the hydroxymethylbilane pre-uroporphyrinogen in several discrete steps. The protein is Porphobilinogen deaminase of Pelobacter propionicus (strain DSM 2379 / NBRC 103807 / OttBd1).